A 347-amino-acid polypeptide reads, in one-letter code: Quinolinate synthase (347 aa).

2 residues coordinate iminosuccinate: His-47 and Ser-68. Cys-113 contributes to the [4Fe-4S] cluster binding site. Iminosuccinate is bound by residues Tyr-139–Asn-141 and Ser-156. Position 200 (Cys-200) interacts with [4Fe-4S] cluster. Iminosuccinate-binding positions include His-226–Glu-228 and Thr-243. Cys-297 is a binding site for [4Fe-4S] cluster.

It belongs to the quinolinate synthase family. Type 1 subfamily. It depends on [4Fe-4S] cluster as a cofactor.

The protein localises to the cytoplasm. The catalysed reaction is iminosuccinate + dihydroxyacetone phosphate = quinolinate + phosphate + 2 H2O + H(+). It participates in cofactor biosynthesis; NAD(+) biosynthesis; quinolinate from iminoaspartate: step 1/1. Catalyzes the condensation of iminoaspartate with dihydroxyacetone phosphate to form quinolinate. The chain is Quinolinate synthase from Salmonella paratyphi A (strain ATCC 9150 / SARB42).